The sequence spans 156 residues: Ribosome maturation factor RimP (156 aa).

It belongs to the RimP family.

The protein resides in the cytoplasm. In terms of biological role, required for maturation of 30S ribosomal subunits. The chain is Ribosome maturation factor RimP from Bacillus thuringiensis (strain Al Hakam).